The sequence spans 215 residues: Peroxiredoxin 1 (215 aa).

The Thioredoxin domain maps to 1–157 (MKLYQKFPET…LLRITKAALV (157 aa)). The Cysteine sulfenic acid (-SOH) intermediate role is filled by Cys-45. A substrate-binding site is contributed by Arg-120.

It belongs to the peroxiredoxin family. Prx6 subfamily. In terms of assembly, homodecamer. Pentamer of dimers that assemble into a ring structure.

The protein localises to the cytoplasm. The enzyme catalyses a hydroperoxide + [thioredoxin]-dithiol = an alcohol + [thioredoxin]-disulfide + H2O. Functionally, thiol-specific peroxidase that catalyzes the reduction of hydrogen peroxide and organic hydroperoxides to water and alcohols, respectively. Plays a role in cell protection against oxidative stress by detoxifying peroxides. This is Peroxiredoxin 1 from Sulfuracidifex metallicus (Sulfolobus metallicus).